Reading from the N-terminus, the 427-residue chain is 3-phosphoshikimate 1-carboxyvinyltransferase (427 aa).

3-phosphoshikimate contacts are provided by lysine 22, serine 23, and arginine 27. Lysine 22 is a binding site for phosphoenolpyruvate. Glycine 96 and arginine 124 together coordinate phosphoenolpyruvate. Positions 169, 170, 171, 197, 313, 336, and 340 each coordinate 3-phosphoshikimate. Glutamine 171 contributes to the phosphoenolpyruvate binding site. Aspartate 313 acts as the Proton acceptor in catalysis. Phosphoenolpyruvate is bound by residues arginine 344, arginine 386, and lysine 411.

Belongs to the EPSP synthase family. Monomer.

It localises to the cytoplasm. The catalysed reaction is 3-phosphoshikimate + phosphoenolpyruvate = 5-O-(1-carboxyvinyl)-3-phosphoshikimate + phosphate. It participates in metabolic intermediate biosynthesis; chorismate biosynthesis; chorismate from D-erythrose 4-phosphate and phosphoenolpyruvate: step 6/7. Catalyzes the transfer of the enolpyruvyl moiety of phosphoenolpyruvate (PEP) to the 5-hydroxyl of shikimate-3-phosphate (S3P) to produce enolpyruvyl shikimate-3-phosphate and inorganic phosphate. This is 3-phosphoshikimate 1-carboxyvinyltransferase from Klebsiella pneumoniae subsp. pneumoniae (strain ATCC 700721 / MGH 78578).